Here is a 164-residue protein sequence, read N- to C-terminus: Ribosome maturation factor RimM (164 aa).

The 72-residue stretch at 90 to 161 (KGSYFIADLI…TVTIKPLEIW (72 aa)) folds into the PRC barrel domain.

It belongs to the RimM family. Binds ribosomal protein uS19.

It is found in the cytoplasm. An accessory protein needed during the final step in the assembly of 30S ribosomal subunit, possibly for assembly of the head region. Essential for efficient processing of 16S rRNA. May be needed both before and after RbfA during the maturation of 16S rRNA. It has affinity for free ribosomal 30S subunits but not for 70S ribosomes. In Clostridium botulinum (strain ATCC 19397 / Type A), this protein is Ribosome maturation factor RimM.